A 303-amino-acid chain; its full sequence is MTAKVLDGKATAAAIKEELRGRVAALAERGRTPGLGTLLVGEDAGSQKYVAGKHRDCAEVGIESIQRELPADATEEQILDVVRELNEDPACTGYIVQLPLPKHVDTQKVLEAIDPDKDADGLHPMNLGRLVASVGGELDSPLPCTPAGCVELLRHHGVELAGKHVLVIGRGVTIGRPAGLVLTRREVNATVTLAHTGTTNLDELLASADVVIAAAGSAHMVTPEQVKEGVIVLDVGVSRVTGEDGKSRVLGDVDPAVKEKAAWMAPNPGGVGPMTRVMLLANVVEAAERAADGENWAGERAGA.

NADP(+) contacts are provided by residues 169 to 171, Thr196, and Val237; that span reads GRG.

The protein belongs to the tetrahydrofolate dehydrogenase/cyclohydrolase family. Homodimer.

It catalyses the reaction (6R)-5,10-methylene-5,6,7,8-tetrahydrofolate + NADP(+) = (6R)-5,10-methenyltetrahydrofolate + NADPH. The catalysed reaction is (6R)-5,10-methenyltetrahydrofolate + H2O = (6R)-10-formyltetrahydrofolate + H(+). It participates in one-carbon metabolism; tetrahydrofolate interconversion. In terms of biological role, catalyzes the oxidation of 5,10-methylenetetrahydrofolate to 5,10-methenyltetrahydrofolate and then the hydrolysis of 5,10-methenyltetrahydrofolate to 10-formyltetrahydrofolate. The chain is Bifunctional protein FolD from Micrococcus luteus (strain ATCC 4698 / DSM 20030 / JCM 1464 / CCM 169 / CCUG 5858 / IAM 1056 / NBRC 3333 / NCIMB 9278 / NCTC 2665 / VKM Ac-2230) (Micrococcus lysodeikticus).